The chain runs to 202 residues: Casparian strip membrane protein 1 (202 aa).

The Cytoplasmic segment spans residues methionine 1–serine 42. A helical membrane pass occupies residues isoleucine 43 to methionine 63. Residues glycine 64–threonine 90 lie on the Extracellular side of the membrane. The helical transmembrane segment at phenylalanine 91–isoleucine 111 threads the bilayer. The Cytoplasmic segment spans residues valine 112 to aspartate 130. The chain crosses the membrane as a helical span at residues threonine 131–alanine 151. Over histidine 152–arginine 173 the chain is Extracellular. Residues valine 174–leucine 194 traverse the membrane as a helical segment. The Cytoplasmic segment spans residues serine 195–asparagine 202.

It belongs to the Casparian strip membrane proteins (CASP) family. In terms of assembly, homodimer and heterodimers.

The protein resides in the cell membrane. Its function is as follows. Regulates membrane-cell wall junctions and localized cell wall deposition. Required for establishment of the Casparian strip membrane domain (CSD) and the subsequent formation of Casparian strips, a cell wall modification of the root endodermis that determines an apoplastic barrier between the intraorganismal apoplasm and the extraorganismal apoplasm and prevents lateral diffusion. The chain is Casparian strip membrane protein 1 from Striga hermonthica (Purple witchweed).